The chain runs to 609 residues: UvrABC system protein C (609 aa).

The region spanning 19–97 (ISPGCYLWKS…IKKHNPRFNV (79 aa)) is the GIY-YIG domain. Residues 208-243 (ESLVGDLSIKMSASSNRMDFEKAARYRDMLQRIQNF) form the UVR domain.

The protein belongs to the UvrC family. Interacts with UvrB in an incision complex.

Its subcellular location is the cytoplasm. Its function is as follows. The UvrABC repair system catalyzes the recognition and processing of DNA lesions. UvrC both incises the 5' and 3' sides of the lesion. The N-terminal half is responsible for the 3' incision and the C-terminal half is responsible for the 5' incision. The protein is UvrABC system protein C of Leptospira borgpetersenii serovar Hardjo-bovis (strain JB197).